We begin with the raw amino-acid sequence, 556 residues long: Arginine--tRNA ligase (556 aa).

A 'HIGH' region motif is present at residues 133–143 (ANPTGPIHIGH).

The protein belongs to the class-I aminoacyl-tRNA synthetase family. In terms of assembly, monomer.

It localises to the cytoplasm. It catalyses the reaction tRNA(Arg) + L-arginine + ATP = L-arginyl-tRNA(Arg) + AMP + diphosphate. The chain is Arginine--tRNA ligase from Dehalococcoides mccartyi (strain CBDB1).